The chain runs to 193 residues: E3 ubiquitin-protein ligase RMA2 (193 aa).

The segment at 21–75 (CNICLDQVRDPVVTLCGHLFCWPCIHKWTYASNNSRQRVDQYDHKREPPKCPVCK) adopts an RING-type zinc-finger fold. A helical; Anchor for type IV membrane protein membrane pass occupies residues 175 to 192 (LSRVYLFLLCFMFMCLFL).

Interacts with ERABP1. In terms of tissue distribution, barely detected in roots and limited to the root tips. Expressed in leaf hydathodes and in siliques.

The protein localises to the endoplasmic reticulum membrane. It carries out the reaction S-ubiquitinyl-[E2 ubiquitin-conjugating enzyme]-L-cysteine + [acceptor protein]-L-lysine = [E2 ubiquitin-conjugating enzyme]-L-cysteine + N(6)-ubiquitinyl-[acceptor protein]-L-lysine.. The protein operates within protein modification; protein ubiquitination. E3 ubiquitin-protein ligase that promotes the ubiquitination and proteasomal degradation of the auxin-binding protein ERABP1. The chain is E3 ubiquitin-protein ligase RMA2 (RMA2) from Arabidopsis thaliana (Mouse-ear cress).